Here is a 345-residue protein sequence, read N- to C-terminus: NADH-quinone oxidoreductase subunit H 1 (345 aa).

Transmembrane regions (helical) follow at residues 11-31 (IILT…ISLL), 50-70 (PNVV…KYIF), 84-104 (FFLA…VIPF), 115-135 (VAIL…IMGG), 161-181 (LGLI…SHIV), 187-207 (AFGL…LFFI), 248-268 (YIAI…GWLS), 277-297 (VFWM…VKAI), and 309-329 (IGWK…AFLA).

This sequence belongs to the complex I subunit 1 family. In terms of assembly, NDH-1 is composed of 14 different subunits. Subunits NuoA, H, J, K, L, M, N constitute the membrane sector of the complex.

Its subcellular location is the cell inner membrane. It catalyses the reaction a quinone + NADH + 5 H(+)(in) = a quinol + NAD(+) + 4 H(+)(out). Functionally, NDH-1 shuttles electrons from NADH, via FMN and iron-sulfur (Fe-S) centers, to quinones in the respiratory chain. The immediate electron acceptor for the enzyme in this species is believed to be ubiquinone. Couples the redox reaction to proton translocation (for every two electrons transferred, four hydrogen ions are translocated across the cytoplasmic membrane), and thus conserves the redox energy in a proton gradient. This subunit may bind ubiquinone. The sequence is that of NADH-quinone oxidoreductase subunit H 1 from Cereibacter sphaeroides (strain ATCC 17023 / DSM 158 / JCM 6121 / CCUG 31486 / LMG 2827 / NBRC 12203 / NCIMB 8253 / ATH 2.4.1.) (Rhodobacter sphaeroides).